A 429-amino-acid polypeptide reads, in one-letter code: 3-phosphoshikimate 1-carboxyvinyltransferase (429 aa).

Positions 20, 21, and 25 each coordinate 3-phosphoshikimate. Lysine 20 is a binding site for phosphoenolpyruvate. The phosphoenolpyruvate site is built by glycine 89 and arginine 118. The 3-phosphoshikimate site is built by serine 164, serine 165, glutamine 166, serine 192, aspartate 311, and lysine 338. Glutamine 166 lines the phosphoenolpyruvate pocket. Aspartate 311 serves as the catalytic Proton acceptor. Residues arginine 342 and arginine 384 each contribute to the phosphoenolpyruvate site.

The protein belongs to the EPSP synthase family. In terms of assembly, monomer.

The protein resides in the cytoplasm. The enzyme catalyses 3-phosphoshikimate + phosphoenolpyruvate = 5-O-(1-carboxyvinyl)-3-phosphoshikimate + phosphate. Its pathway is metabolic intermediate biosynthesis; chorismate biosynthesis. In terms of biological role, catalyzes the transfer of the enolpyruvyl moiety of phosphoenolpyruvate (PEP) to the 5-hydroxyl of shikimate-3-phosphate (S3P) to produce enolpyruvyl shikimate-3-phosphate and inorganic phosphate. This is 3-phosphoshikimate 1-carboxyvinyltransferase from Methanococcus vannielii (strain ATCC 35089 / DSM 1224 / JCM 13029 / OCM 148 / SB).